The chain runs to 208 residues: Small ribosomal subunit protein uS4 (208 aa).

The S4 RNA-binding domain occupies 95–157 (RRIDNIVYRA…DSLKKLIRSN (63 aa)).

It belongs to the universal ribosomal protein uS4 family. Part of the 30S ribosomal subunit. Contacts protein S5. The interaction surface between S4 and S5 is involved in control of translational fidelity.

One of the primary rRNA binding proteins, it binds directly to 16S rRNA where it nucleates assembly of the body of the 30S subunit. Its function is as follows. With S5 and S12 plays an important role in translational accuracy. This chain is Small ribosomal subunit protein uS4, found in Borrelia garinii subsp. bavariensis (strain ATCC BAA-2496 / DSM 23469 / PBi) (Borreliella bavariensis).